We begin with the raw amino-acid sequence, 1227 residues long: ATP-dependent helicase/nuclease subunit A (1227 aa).

A UvrD-like helicase ATP-binding domain is found at 37-503; sequence QKRTAEQIEA…ILLKENFRSQ (467 aa). 58-65 provides a ligand contact to ATP; sequence ASAGSGKT. In terms of domain architecture, UvrD-like helicase C-terminal spans 532 to 816; the sequence is SLVAGSPGQK…QLMTIHKSKG (285 aa).

Belongs to the helicase family. AddA subfamily. Heterodimer of AddA and AddB/RexB. Mg(2+) is required as a cofactor.

It carries out the reaction Couples ATP hydrolysis with the unwinding of duplex DNA by translocating in the 3'-5' direction.. The enzyme catalyses ATP + H2O = ADP + phosphate + H(+). In terms of biological role, the heterodimer acts as both an ATP-dependent DNA helicase and an ATP-dependent, dual-direction single-stranded exonuclease. Recognizes the chi site generating a DNA molecule suitable for the initiation of homologous recombination. The AddA nuclease domain is required for chi fragment generation; this subunit has the helicase and 3' -&gt; 5' nuclease activities. This Streptococcus suis (strain 98HAH33) protein is ATP-dependent helicase/nuclease subunit A.